Consider the following 285-residue polypeptide: Hydroxyethylthiazole kinase (285 aa).

Residue M43 coordinates substrate. 2 residues coordinate ATP: K119 and S172. G199 is a binding site for substrate.

It belongs to the Thz kinase family. Mg(2+) is required as a cofactor.

It catalyses the reaction 5-(2-hydroxyethyl)-4-methylthiazole + ATP = 4-methyl-5-(2-phosphooxyethyl)-thiazole + ADP + H(+). It participates in cofactor biosynthesis; thiamine diphosphate biosynthesis; 4-methyl-5-(2-phosphoethyl)-thiazole from 5-(2-hydroxyethyl)-4-methylthiazole: step 1/1. Catalyzes the phosphorylation of the hydroxyl group of 4-methyl-5-beta-hydroxyethylthiazole (THZ). This chain is Hydroxyethylthiazole kinase, found in Desulfovibrio desulfuricans (strain ATCC 27774 / DSM 6949 / MB).